A 160-amino-acid polypeptide reads, in one-letter code: NADH-quinone oxidoreductase subunit B (160 aa).

Residues Cys37, Cys38, Cys102, and Cys132 each contribute to the [4Fe-4S] cluster site.

The protein belongs to the complex I 20 kDa subunit family. As to quaternary structure, NDH-1 is composed of 14 different subunits. Subunits NuoB, C, D, E, F, and G constitute the peripheral sector of the complex. [4Fe-4S] cluster is required as a cofactor.

It is found in the cell inner membrane. It carries out the reaction a quinone + NADH + 5 H(+)(in) = a quinol + NAD(+) + 4 H(+)(out). In terms of biological role, NDH-1 shuttles electrons from NADH, via FMN and iron-sulfur (Fe-S) centers, to quinones in the respiratory chain. Couples the redox reaction to proton translocation (for every two electrons transferred, four hydrogen ions are translocated across the cytoplasmic membrane), and thus conserves the redox energy in a proton gradient. The sequence is that of NADH-quinone oxidoreductase subunit B from Neisseria gonorrhoeae (strain ATCC 700825 / FA 1090).